A 190-amino-acid chain; its full sequence is Adenylate kinase (190 aa).

Residue 10–15 participates in ATP binding; that stretch reads AAGKGT. Residues 30–59 are NMP; sequence STGDMLRAAIASGSELGQRVSGIMERGELV. AMP-binding positions include threonine 31, arginine 36, 57 to 59, 85 to 88, and glutamine 92; these read ELV and GFPR. Residues 126 to 136 form an LID region; the sequence is GRFAESGRADD. Arginine 127 lines the ATP pocket. The AMP site is built by arginine 133 and arginine 144. Glycine 172 serves as a coordination point for ATP.

Belongs to the adenylate kinase family. Monomer.

The protein localises to the cytoplasm. It carries out the reaction AMP + ATP = 2 ADP. It participates in purine metabolism; AMP biosynthesis via salvage pathway; AMP from ADP: step 1/1. In terms of biological role, catalyzes the reversible transfer of the terminal phosphate group between ATP and AMP. Plays an important role in cellular energy homeostasis and in adenine nucleotide metabolism. The sequence is that of Adenylate kinase from Phenylobacterium zucineum (strain HLK1).